The chain runs to 40 residues: Dolichyl-diphosphooligosaccharide--protein glycosyltransferase subunit 4 (40 aa).

Residues 1–4 are Lumenal-facing; sequence MISD. A helical transmembrane segment spans residues 5–25; it reads VQLAIFSNVLGVFLFLLVVAY. Residues 26 to 40 lie on the Cytoplasmic side of the membrane; the sequence is HYINANTGKPSAKAK.

The protein belongs to the OST4 family. As to quaternary structure, component of the oligosaccharyltransferase (OST) complex.

It is found in the endoplasmic reticulum membrane. Subunit of the oligosaccharyl transferase (OST) complex that catalyzes the initial transfer of a defined glycan (Glc(3)Man(9)GlcNAc(2) in eukaryotes) from the lipid carrier dolichol-pyrophosphate to an asparagine residue within an Asn-X-Ser/Thr consensus motif in nascent polypeptide chains, the first step in protein N-glycosylation. N-glycosylation occurs cotranslationally and the complex associates with the Sec61 complex at the channel-forming translocon complex that mediates protein translocation across the endoplasmic reticulum (ER). All subunits are required for a maximal enzyme activity. This chain is Dolichyl-diphosphooligosaccharide--protein glycosyltransferase subunit 4, found in Drosophila yakuba (Fruit fly).